The sequence spans 201 residues: CASP-like protein 2A1 (201 aa).

The tract at residues 1–27 (MEKRDKGSSPMATMMGSRDENEDVENT) is disordered. At 1–30 (MEKRDKGSSPMATMMGSRDENEDVENTTRT) the chain is on the cytoplasmic side. Residues 31–51 (AETMLRLVPMALCVSALVVML) form a helical membrane-spanning segment. Residues 52-72 (KNTQTNDYGSLSYSDLGAFRY) lie on the Extracellular side of the membrane. Residues 73 to 93 (LVHVNGICAGYSLLSAVIVAM) form a helical membrane-spanning segment. Residues 94–101 (PRASTMPR) lie on the Cytoplasmic side of the membrane. A helical membrane pass occupies residues 102-122 (AWAFFLLDQVLTYVILAAGTV). Residues 123 to 152 (STEVLYLASKGDTTITWSEACVSFGGFCHK) are Extracellular-facing. The helical transmembrane segment at 153-173 (ALISIVITFVVVICYAALSLL) threads the bilayer. Topologically, residues 174-201 (SSYKLFSKYDSPVLTYPGKGIEIATFHG) are cytoplasmic.

The protein belongs to the Casparian strip membrane proteins (CASP) family. In terms of assembly, homodimer and heterodimers.

The protein localises to the cell membrane. The protein is CASP-like protein 2A1 of Populus trichocarpa (Western balsam poplar).